Here is a 396-residue protein sequence, read N- to C-terminus: 1-deoxy-D-xylulose 5-phosphate reductoisomerase (396 aa).

NADPH is bound by residues Thr10, Gly11, Ser12, Ile13, and Asn123. Lys124 contacts 1-deoxy-D-xylulose 5-phosphate. Glu125 is a binding site for NADPH. Residue Asp149 participates in Mn(2+) binding. 1-deoxy-D-xylulose 5-phosphate contacts are provided by Ser150, Glu151, Ser185, and His208. Glu151 lines the Mn(2+) pocket. Gly214 contacts NADPH. Ser221, Asn226, Lys227, and Glu230 together coordinate 1-deoxy-D-xylulose 5-phosphate. Glu230 is a Mn(2+) binding site.

This sequence belongs to the DXR family. Mg(2+) is required as a cofactor. The cofactor is Mn(2+).

It catalyses the reaction 2-C-methyl-D-erythritol 4-phosphate + NADP(+) = 1-deoxy-D-xylulose 5-phosphate + NADPH + H(+). The protein operates within isoprenoid biosynthesis; isopentenyl diphosphate biosynthesis via DXP pathway; isopentenyl diphosphate from 1-deoxy-D-xylulose 5-phosphate: step 1/6. Its function is as follows. Catalyzes the NADPH-dependent rearrangement and reduction of 1-deoxy-D-xylulose-5-phosphate (DXP) to 2-C-methyl-D-erythritol 4-phosphate (MEP). This chain is 1-deoxy-D-xylulose 5-phosphate reductoisomerase, found in Shewanella sp. (strain ANA-3).